A 663-amino-acid polypeptide reads, in one-letter code: DNA ligase 1 (663 aa).

Residues 28 to 32 (DKEYD) and 76 to 77 (SL) contribute to the NAD(+) site. The active-site N6-AMP-lysine intermediate is Lys-118. Residues Arg-139, Glu-173, and Lys-310 each coordinate NAD(+). Zn(2+) is bound by residues Cys-403, Cys-406, Cys-419, and Cys-425. The region spanning 583-663 (VSESVFNDKT…KFEELIESVK (81 aa)) is the BRCT domain.

The protein belongs to the NAD-dependent DNA ligase family. LigA subfamily. Requires Mg(2+) as cofactor. The cofactor is Mn(2+).

The enzyme catalyses NAD(+) + (deoxyribonucleotide)n-3'-hydroxyl + 5'-phospho-(deoxyribonucleotide)m = (deoxyribonucleotide)n+m + AMP + beta-nicotinamide D-nucleotide.. Functionally, DNA ligase that catalyzes the formation of phosphodiester linkages between 5'-phosphoryl and 3'-hydroxyl groups in double-stranded DNA using NAD as a coenzyme and as the energy source for the reaction. It is essential for DNA replication and repair of damaged DNA. The protein is DNA ligase 1 of Clostridium acetobutylicum (strain ATCC 824 / DSM 792 / JCM 1419 / IAM 19013 / LMG 5710 / NBRC 13948 / NRRL B-527 / VKM B-1787 / 2291 / W).